The following is a 1457-amino-acid chain: Bridge-like lipid transfer protein family member 3B (1457 aa).

Residues 3 to 94 form the Chorein N-terminal domain; it reads GIIKKQILKH…DKVIMEMSTC (92 aa). Disordered stretches follow at residues 267–295 and 409–449; these read STEQ…KTPQ and DRNL…PQPS. Residues 278-295 show a composition bias toward polar residues; sequence PTQSSTVTSSAQHVKTPQ. Phosphoserine is present on residues S414, S418, S774, and S934. 3 disordered regions span residues 975–1038, 1056–1099, and 1145–1183; these read SEDE…TGKG, ASLS…LSVS, and SNTS…TQEN. Over residues 980 to 995 the composition is skewed to polar residues; it reads SGLSHKSGSGEMTSEG. The residue at position 1008 (S1008) is a Phosphoserine. Residues 1145-1180 are compositionally biased toward polar residues; the sequence is SNTSCQSPAESVNTSANTQTCGEASPEAVSTNSEGT. Residues 1410-1455 are a coiled coil; the sequence is ANFLDITREQLMEENECLRQRLAQAKMELAEAHSARDELLHQMKRM.

In terms of assembly, homodimer (via N-terminus). Associates with the Golgi-associated retrograde protein (GARP) complex. Interacts with GARP complex component VPS52. Interacts (via C-terminal coiled-coil domain) with STX6.

The protein resides in the cytoplasm. It is found in the cytosol. It localises to the early endosome. Its function is as follows. Tube-forming lipid transport protein which mediates the transfer of lipids between membranes at organelle contact sites. Required for retrograde traffic of vesicle clusters in the early endocytic pathway to the Golgi complex. In Mus musculus (Mouse), this protein is Bridge-like lipid transfer protein family member 3B (Bltp3b).